The chain runs to 101 residues: Small ribosomal subunit protein uS14 (101 aa).

Belongs to the universal ribosomal protein uS14 family. Part of the 30S ribosomal subunit. Contacts proteins S3 and S10.

Binds 16S rRNA, required for the assembly of 30S particles and may also be responsible for determining the conformation of the 16S rRNA at the A site. This chain is Small ribosomal subunit protein uS14, found in Buchnera aphidicola subsp. Schizaphis graminum (strain Sg).